We begin with the raw amino-acid sequence, 537 residues long: Ataxin-10 homolog (537 aa).

The protein belongs to the ataxin-10 family.

It localises to the cytoplasm. May play a role in the regulation of cytokinesis. The polypeptide is Ataxin-10 homolog (CTR86) (Kluyveromyces lactis (strain ATCC 8585 / CBS 2359 / DSM 70799 / NBRC 1267 / NRRL Y-1140 / WM37) (Yeast)).